Reading from the N-terminus, the 334-residue chain is NAD-dependent protein deacetylase sirtuin-3 (334 aa).

The 263-residue stretch at 53–315 (SSEKKFSLQD…ERLVDLLGWT (263 aa)) folds into the Deacetylase sirtuin-type domain. Position 57 is an N6-succinyllysine (lysine 57). NAD(+) is bound by residues 80–100 (GAGI…SGLY) and 163–166 (QNID). The Proton acceptor role is filled by histidine 183. Zn(2+) is bound by residues cysteine 191, cysteine 194, cysteine 215, and cysteine 218. NAD(+) is bound by residues 254–256 (GTS) and 279–281 (NRD).

It belongs to the sirtuin family. Class I subfamily. As to quaternary structure, upon metabolic stress, forms a complex composed of FOXO3, SIRT3 and mitochondrial RNA polymerase POLRMT; the complex is recruited to mtDNA in a SIRT3-dependent manner. Also forms a complex composed of FOXO3, SIRT3, TFAM and POLRMT. Interacts with NDUFA9, ACSS1, IDH2 and GDH. Interacts with PCCA. Zn(2+) is required as a cofactor. In terms of tissue distribution, expressed in cardiomyocytes (at protein level). Expressed in the brain, liver, kidney and testes. Expressed in skeletal muscles (at protein level).

Its subcellular location is the mitochondrion matrix. The protein localises to the cytoplasm. The enzyme catalyses N(6)-acetyl-L-lysyl-[protein] + NAD(+) + H2O = 2''-O-acetyl-ADP-D-ribose + nicotinamide + L-lysyl-[protein]. It carries out the reaction N(6)-[(S)-lactoyl]-L-lysyl-[protein] + NAD(+) + H2O = 2''-O-(S)-lactoyl-ADP-D-ribose + nicotinamide + L-lysyl-[protein]. In terms of biological role, NAD-dependent protein deacetylase. Activates or deactivates mitochondrial target proteins by deacetylating key lysine residues. Known targets include ACSS1, IDH, GDH, PDHA1, SOD2, LCAD, SDHA, MRPL12 and the ATP synthase subunit ATP5PO. Contributes to the regulation of the cellular energy metabolism. Important for regulating tissue-specific ATP levels. In response to metabolic stress, deacetylates transcription factor FOXO3 and recruits FOXO3 and mitochondrial RNA polymerase POLRMT to mtDNA to promote mtDNA transcription. Acts as a regulator of ceramide metabolism by mediating deacetylation of ceramide synthases CERS1, CERS2 and CERS6, thereby increasing their activity and promoting mitochondrial ceramide accumulation. Regulates hepatic lipogenesis. Uses NAD(+) substrate imported by SLC25A47, triggering downstream activation of PRKAA1/AMPK-alpha signaling cascade that ultimately downregulates sterol regulatory element-binding protein (SREBP) transcriptional activities and ATP-consuming lipogenesis to restore cellular energy balance. In addition to protein deacetylase activity, also acts as a protein-lysine deacylase by mediating delactylation of proteins, such as CCNE2 and 'Lys-16' of histone H4 (H4K16la). This chain is NAD-dependent protein deacetylase sirtuin-3, found in Mus musculus (Mouse).